A 338-amino-acid polypeptide reads, in one-letter code: Ketol-acid reductoisomerase (NADP(+)) (338 aa).

The 181-residue stretch at 1–181 folds into the KARI N-terminal Rossmann domain; that stretch reads MQVYYDKDCD…GGGRTGIIET (181 aa). Residues 24–27, Arg-47, Ser-50, Ser-52, and 82–85 contribute to the NADP(+) site; these read FGSQ and DEFQ. The active site involves His-107. Position 133 (Gly-133) interacts with NADP(+). Residues 182–327 form the KARI C-terminal knotted domain; the sequence is TFKDETETDL…EKLRSMMPWI (146 aa). Residues Asp-190, Glu-194, Glu-226, and Glu-230 each contribute to the Mg(2+) site. A substrate-binding site is contributed by Ser-251.

The protein belongs to the ketol-acid reductoisomerase family. Mg(2+) is required as a cofactor.

The enzyme catalyses (2R)-2,3-dihydroxy-3-methylbutanoate + NADP(+) = (2S)-2-acetolactate + NADPH + H(+). It carries out the reaction (2R,3R)-2,3-dihydroxy-3-methylpentanoate + NADP(+) = (S)-2-ethyl-2-hydroxy-3-oxobutanoate + NADPH + H(+). It participates in amino-acid biosynthesis; L-isoleucine biosynthesis; L-isoleucine from 2-oxobutanoate: step 2/4. It functions in the pathway amino-acid biosynthesis; L-valine biosynthesis; L-valine from pyruvate: step 2/4. In terms of biological role, involved in the biosynthesis of branched-chain amino acids (BCAA). Catalyzes an alkyl-migration followed by a ketol-acid reduction of (S)-2-acetolactate (S2AL) to yield (R)-2,3-dihydroxy-isovalerate. In the isomerase reaction, S2AL is rearranged via a Mg-dependent methyl migration to produce 3-hydroxy-3-methyl-2-ketobutyrate (HMKB). In the reductase reaction, this 2-ketoacid undergoes a metal-dependent reduction by NADPH to yield (R)-2,3-dihydroxy-isovalerate. The polypeptide is Ketol-acid reductoisomerase (NADP(+)) (Marinobacter nauticus (strain ATCC 700491 / DSM 11845 / VT8) (Marinobacter aquaeolei)).